Consider the following 142-residue polypeptide: Snaclec 2 (142 aa).

The N-terminal stretch at 1-23 is a signal peptide; the sequence is MGRFIFVSFSLLVVFLSLSGTGA. An intrachain disulfide couples C25 to C36. Positions 32–139 constitute a C-type lectin domain; the sequence is YEGHCYRVFQ…CSETHNVICK (108 aa). The N-linked (GlcNAc...) asparagine glycan is linked to N43. 2 disulfide bridges follow: C53/C138 and C115/C130.

It belongs to the snaclec family. Heterodimer; disulfide-linked. In terms of tissue distribution, expressed by the venom gland.

The protein resides in the secreted. In terms of biological role, interferes with one step of hemostasis (modulation of platelet aggregation, or coagulation cascade, for example). The chain is Snaclec 2 from Sistrurus catenatus edwardsii (Desert massasauga).